Here is a 476-residue protein sequence, read N- to C-terminus: Bifunctional protein HldE (476 aa).

A ribokinase region spans residues 1–319 (MKVTLPAFEK…GALASHQGES (319 aa)). 195 to 198 (NMSE) contacts ATP. Aspartate 264 is a catalytic residue. The cytidylyltransferase stretch occupies residues 345–476 (MTNGCFDILH…SIIQNIMARQ (132 aa)).

The protein in the N-terminal section; belongs to the carbohydrate kinase PfkB family. It in the C-terminal section; belongs to the cytidylyltransferase family. In terms of assembly, homodimer.

It catalyses the reaction D-glycero-beta-D-manno-heptose 7-phosphate + ATP = D-glycero-beta-D-manno-heptose 1,7-bisphosphate + ADP + H(+). It carries out the reaction D-glycero-beta-D-manno-heptose 1-phosphate + ATP + H(+) = ADP-D-glycero-beta-D-manno-heptose + diphosphate. The protein operates within nucleotide-sugar biosynthesis; ADP-L-glycero-beta-D-manno-heptose biosynthesis; ADP-L-glycero-beta-D-manno-heptose from D-glycero-beta-D-manno-heptose 7-phosphate: step 1/4. Its pathway is nucleotide-sugar biosynthesis; ADP-L-glycero-beta-D-manno-heptose biosynthesis; ADP-L-glycero-beta-D-manno-heptose from D-glycero-beta-D-manno-heptose 7-phosphate: step 3/4. Its function is as follows. Catalyzes the phosphorylation of D-glycero-D-manno-heptose 7-phosphate at the C-1 position to selectively form D-glycero-beta-D-manno-heptose-1,7-bisphosphate. Catalyzes the ADP transfer from ATP to D-glycero-beta-D-manno-heptose 1-phosphate, yielding ADP-D-glycero-beta-D-manno-heptose. This chain is Bifunctional protein HldE, found in Shewanella denitrificans (strain OS217 / ATCC BAA-1090 / DSM 15013).